The sequence spans 72 residues: ATP synthase subunit c (72 aa).

The next 2 helical transmembrane spans lie at 1-21 (MSLG…GAGI) and 49-69 (FIGV…AFIV).

It belongs to the ATPase C chain family. In terms of assembly, F-type ATPases have 2 components, F(1) - the catalytic core - and F(0) - the membrane proton channel. F(1) has five subunits: alpha(3), beta(3), gamma(1), delta(1), epsilon(1). F(0) has three main subunits: a(1), b(2) and c(10-14). The alpha and beta chains form an alternating ring which encloses part of the gamma chain. F(1) is attached to F(0) by a central stalk formed by the gamma and epsilon chains, while a peripheral stalk is formed by the delta and b chains.

It is found in the cell membrane. Its function is as follows. F(1)F(0) ATP synthase produces ATP from ADP in the presence of a proton or sodium gradient. F-type ATPases consist of two structural domains, F(1) containing the extramembraneous catalytic core and F(0) containing the membrane proton channel, linked together by a central stalk and a peripheral stalk. During catalysis, ATP synthesis in the catalytic domain of F(1) is coupled via a rotary mechanism of the central stalk subunits to proton translocation. Key component of the F(0) channel; it plays a direct role in translocation across the membrane. A homomeric c-ring of between 10-14 subunits forms the central stalk rotor element with the F(1) delta and epsilon subunits. The polypeptide is ATP synthase subunit c (Bacillus anthracis (strain A0248)).